The sequence spans 461 residues: Thyroid hormone receptor beta (461 aa).

Residues 1–24 form a disordered region; that stretch reads MTPNSMTENRLPAWDKQKPHPDRG. Residues 1–106 are modulating; it reads MTPNSMTENR…IPSYLDKDEL (106 aa). Basic and acidic residues predominate over residues 13–24; sequence AWDKQKPHPDRG. Zn(2+) is bound by residues C107, C110, C124, C127, C145, C151, C161, and C164. NR C4-type zinc fingers lie at residues 107–127 and 145–169; these read CVVC…CEGC and CKYE…FKKC. Residues 107–181 constitute a DNA-binding region (nuclear receptor); the sequence is CVVCGDKATG…VGMATDLVLD (75 aa). The NR LBD domain occupies 217–461; that stretch reads EEWELIKTVT…PPLFLEVFED (245 aa). The interval 244-461 is interaction with NR2F6; that stretch reads KFLPEDIGQA…PPLFLEVFED (218 aa). Residues R282, N331, and H435 each coordinate 3,3',5-triiodo-L-thyronine. Residues R282, N331, and H435 each coordinate L-thyroxine.

It belongs to the nuclear hormone receptor family. NR1 subfamily. As to quaternary structure, binds DNA as a dimer; homodimer and heterodimer with RXRA. Interacts with the coactivators NCOA1/SRC1, NCOA2/GRIP1, NCOA7 and MED1/TRAP220 in a ligand-inducible manner. Interacts with the corepressor NCOR1 in absence of ligand. Interacts with C1D. Interacts with NR2F6; the interaction impairs the binding of the THRB homodimer and THRB:RXRB heterodimer to T3 response elements. Interacts with PRMT2 and THRSP. Interacts with TACC1; this interaction is decreased in the presence of thyroid hormone T3.

It localises to the nucleus. Its function is as follows. Nuclear hormone receptor that can act as a repressor or activator of transcription. High affinity receptor for thyroid hormones, including triiodothyronine and thyroxine. The chain is Thyroid hormone receptor beta (Thrb) from Rattus norvegicus (Rat).